Consider the following 176-residue polypeptide: Adenine phosphoribosyltransferase (176 aa).

Belongs to the purine/pyrimidine phosphoribosyltransferase family. In terms of assembly, homodimer.

It is found in the cytoplasm. The catalysed reaction is AMP + diphosphate = 5-phospho-alpha-D-ribose 1-diphosphate + adenine. Its pathway is purine metabolism; AMP biosynthesis via salvage pathway; AMP from adenine: step 1/1. In terms of biological role, catalyzes a salvage reaction resulting in the formation of AMP, that is energically less costly than de novo synthesis. The sequence is that of Adenine phosphoribosyltransferase from Borreliella burgdorferi (strain ZS7) (Borrelia burgdorferi).